A 220-amino-acid chain; its full sequence is Glutamine amidotransferase-like class 1 domain-containing protein 1 (220 aa).

Positions 1 to 38 (MASERLPNRPACLLVASGAAEGVSAQSFLHCFTMASTA) are cleaved as a signal peptide. An N-linked (GlcNAc...) asparagine glycan is attached at Asn201.

It belongs to the peptidase C56 family. In terms of assembly, homotetramer. Component of the FERRY complex composed of five subunits, TBCK, PPP1R21, FERRY3, CRYZL1 and GATD1 with a ratio of 1:2:1:2:4, respectively.

It is found in the secreted. The protein localises to the early endosome. In terms of biological role, component of the FERRY complex (Five-subunit Endosomal Rab5 and RNA/ribosome intermediary). The FERRY complex directly interacts with mRNAs and RAB5A, and functions as a RAB5A effector involved in the localization and the distribution of specific mRNAs most likely by mediating their endosomal transport. The complex recruits mRNAs and ribosomes to early endosomes through direct mRNA-interaction. The sequence is that of Glutamine amidotransferase-like class 1 domain-containing protein 1 from Homo sapiens (Human).